A 599-amino-acid chain; its full sequence is NADH-quinone oxidoreductase subunit C/D (599 aa).

The tract at residues 1-189 (MTELMTQNSA…DPFVLTKQKE (189 aa)) is NADH dehydrogenase I subunit C. Residues 213-599 (DFMFLNLGPN…IDFVMSDVDR (387 aa)) form an NADH dehydrogenase I subunit D region.

The protein in the N-terminal section; belongs to the complex I 30 kDa subunit family. In the C-terminal section; belongs to the complex I 49 kDa subunit family. In terms of assembly, NDH-1 is composed of 13 different subunits. Subunits NuoB, CD, E, F, and G constitute the peripheral sector of the complex.

The protein localises to the cell inner membrane. It carries out the reaction a quinone + NADH + 5 H(+)(in) = a quinol + NAD(+) + 4 H(+)(out). Functionally, NDH-1 shuttles electrons from NADH, via FMN and iron-sulfur (Fe-S) centers, to quinones in the respiratory chain. The immediate electron acceptor for the enzyme in this species is believed to be ubiquinone. Couples the redox reaction to proton translocation (for every two electrons transferred, four hydrogen ions are translocated across the cytoplasmic membrane), and thus conserves the redox energy in a proton gradient. This chain is NADH-quinone oxidoreductase subunit C/D, found in Sodalis glossinidius (strain morsitans).